A 218-amino-acid chain; its full sequence is Small ribosomal subunit protein uS3c (218 aa).

The region spanning 47–117 (VRTHIRNSSN…KLKITLSEID (71 aa)) is the KH type-2 domain.

Belongs to the universal ribosomal protein uS3 family. As to quaternary structure, part of the 30S ribosomal subunit.

The protein resides in the plastid. It is found in the chloroplast. The sequence is that of Small ribosomal subunit protein uS3c (rps3) from Spirogyra maxima (Green alga).